Reading from the N-terminus, the 222-residue chain is uncharacterized protein (222 aa).

The tat-type signal signal peptide spans 1-27 (MSFTRRKFVLGMGTVIFFTGSASSLLA). 4Fe-4S ferredoxin-type domains lie at 37-66 (YAMI…PAQG), 83-114 (TQYH…RDEQ), and 115-144 (GIVR…LNPV). 16 residues coordinate [4Fe-4S] cluster: C46, C49, C52, C56, C92, C95, C100, C104, C124, C127, C130, C134, C151, C154, C167, and C171.

Post-translationally, predicted to be exported by the Tat system. The position of the signal peptide cleavage has not been experimentally proven.

This is an uncharacterized protein from Escherichia coli O157:H7.